We begin with the raw amino-acid sequence, 37 residues long: Potassium channel toxin alpha-KTx 2.19 (37 aa).

Intrachain disulfides connect C7-C28, C13-C33, and C17-C35.

Expressed by the venom gland.

It is found in the secreted. Inhibitor of voltage-gated potassium channels. This chain is Potassium channel toxin alpha-KTx 2.19, found in Rhopalurus junceus (Caribbean blue scorpion).